The sequence spans 104 residues: Small ribosomal subunit protein uS10 (104 aa).

It belongs to the universal ribosomal protein uS10 family. In terms of assembly, part of the 30S ribosomal subunit.

Functionally, involved in the binding of tRNA to the ribosomes. This is Small ribosomal subunit protein uS10 from Thermosynechococcus vestitus (strain NIES-2133 / IAM M-273 / BP-1).